A 229-amino-acid polypeptide reads, in one-letter code: Large ribosomal subunit protein uL1 (229 aa).

The protein belongs to the universal ribosomal protein uL1 family. In terms of assembly, part of the 50S ribosomal subunit.

Binds directly to 23S rRNA. The L1 stalk is quite mobile in the ribosome, and is involved in E site tRNA release. Functionally, protein L1 is also a translational repressor protein, it controls the translation of the L11 operon by binding to its mRNA. The sequence is that of Large ribosomal subunit protein uL1 from Chlorobium phaeobacteroides (strain DSM 266 / SMG 266 / 2430).